A 338-amino-acid polypeptide reads, in one-letter code: Holliday junction branch migration complex subunit RuvB (338 aa).

The disordered stretch occupies residues 1-22 (MVDDERVVSPETADDHEDSVEK). Residues 4-185 (DERVVSPETA…FGIVEHMAYY (182 aa)) form a large ATPase domain (RuvB-L) region. Residues leucine 24, arginine 25, glycine 66, lysine 69, threonine 70, threonine 71, 132 to 134 (EDF), arginine 175, tyrosine 185, and arginine 222 each bind ATP. Threonine 70 contributes to the Mg(2+) binding site. The tract at residues 186–257 (ETTDLQEIVL…IVDHALDLLR (72 aa)) is small ATPAse domain (RuvB-S). Residues 260–338 (SAGLDATDIK…HLGRTMPDNN (79 aa)) form a head domain (RuvB-H) region. DNA contacts are provided by arginine 315 and arginine 320.

It belongs to the RuvB family. In terms of assembly, homohexamer. Forms an RuvA(8)-RuvB(12)-Holliday junction (HJ) complex. HJ DNA is sandwiched between 2 RuvA tetramers; dsDNA enters through RuvA and exits via RuvB. An RuvB hexamer assembles on each DNA strand where it exits the tetramer. Each RuvB hexamer is contacted by two RuvA subunits (via domain III) on 2 adjacent RuvB subunits; this complex drives branch migration. In the full resolvosome a probable DNA-RuvA(4)-RuvB(12)-RuvC(2) complex forms which resolves the HJ.

The protein resides in the cytoplasm. It catalyses the reaction ATP + H2O = ADP + phosphate + H(+). Functionally, the RuvA-RuvB-RuvC complex processes Holliday junction (HJ) DNA during genetic recombination and DNA repair, while the RuvA-RuvB complex plays an important role in the rescue of blocked DNA replication forks via replication fork reversal (RFR). RuvA specifically binds to HJ cruciform DNA, conferring on it an open structure. The RuvB hexamer acts as an ATP-dependent pump, pulling dsDNA into and through the RuvAB complex. RuvB forms 2 homohexamers on either side of HJ DNA bound by 1 or 2 RuvA tetramers; 4 subunits per hexamer contact DNA at a time. Coordinated motions by a converter formed by DNA-disengaged RuvB subunits stimulates ATP hydrolysis and nucleotide exchange. Immobilization of the converter enables RuvB to convert the ATP-contained energy into a lever motion, pulling 2 nucleotides of DNA out of the RuvA tetramer per ATP hydrolyzed, thus driving DNA branch migration. The RuvB motors rotate together with the DNA substrate, which together with the progressing nucleotide cycle form the mechanistic basis for DNA recombination by continuous HJ branch migration. Branch migration allows RuvC to scan DNA until it finds its consensus sequence, where it cleaves and resolves cruciform DNA. This Levilactobacillus brevis (strain ATCC 367 / BCRC 12310 / CIP 105137 / JCM 1170 / LMG 11437 / NCIMB 947 / NCTC 947) (Lactobacillus brevis) protein is Holliday junction branch migration complex subunit RuvB.